The following is a 388-amino-acid chain: Chorismate synthase (388 aa).

NADP(+) is bound by residues arginine 39 and arginine 45. Residues 130-132 (RSS), 251-252 (NA), alanine 296, 311-315 (KPIPT), and arginine 337 each bind FMN.

The protein belongs to the chorismate synthase family. In terms of assembly, homotetramer. The cofactor is FMNH2.

It catalyses the reaction 5-O-(1-carboxyvinyl)-3-phosphoshikimate = chorismate + phosphate. It participates in metabolic intermediate biosynthesis; chorismate biosynthesis; chorismate from D-erythrose 4-phosphate and phosphoenolpyruvate: step 7/7. Catalyzes the anti-1,4-elimination of the C-3 phosphate and the C-6 proR hydrogen from 5-enolpyruvylshikimate-3-phosphate (EPSP) to yield chorismate, which is the branch point compound that serves as the starting substrate for the three terminal pathways of aromatic amino acid biosynthesis. This reaction introduces a second double bond into the aromatic ring system. The sequence is that of Chorismate synthase from Streptococcus equi subsp. equi (strain 4047).